A 229-amino-acid chain; its full sequence is Large ribosomal subunit protein uL1 (229 aa).

This sequence belongs to the universal ribosomal protein uL1 family. Part of the 50S ribosomal subunit.

In terms of biological role, binds directly to 23S rRNA. The L1 stalk is quite mobile in the ribosome, and is involved in E site tRNA release. Its function is as follows. Protein L1 is also a translational repressor protein, it controls the translation of the L11 operon by binding to its mRNA. This is Large ribosomal subunit protein uL1 from Desulforamulus reducens (strain ATCC BAA-1160 / DSM 100696 / MI-1) (Desulfotomaculum reducens).